The sequence spans 161 residues: 4-hydroxybenzoyl-CoA reductase subunit gamma (161 aa).

Residues 3–79 (NILRLTLNGR…GKKVETVESL (77 aa)) enclose the 2Fe-2S ferredoxin-type domain. The [2Fe-2S] cluster site is built by C41, C46, C49, C61, C100, C103, C135, and C137.

As to quaternary structure, heterohexamer of two alpha, two beta and two gamma subunits. The cofactor is [2Fe-2S] cluster.

It catalyses the reaction oxidized 2[4Fe-4S]-[ferredoxin] + benzoyl-CoA + H2O = 4-hydroxybenzoyl-CoA + reduced 2[4Fe-4S]-[ferredoxin] + 2 H(+). Inactivated by low concentrations of cyanide in vitro. Functionally, component of a complex that catalyzes the reductive dehydroxylation of 4-hydroxybenzoyl-CoA to benzoyl-CoA. Reaction is not reversible. Is a key enzyme in the anaerobic degradation of phenolic compounds. In Thauera aromatica, this protein is 4-hydroxybenzoyl-CoA reductase subunit gamma (hcrC).